A 107-amino-acid chain; its full sequence is Phosphoribosyl-ATP pyrophosphatase (107 aa).

It belongs to the PRA-PH family.

The protein resides in the cytoplasm. The catalysed reaction is 1-(5-phospho-beta-D-ribosyl)-ATP + H2O = 1-(5-phospho-beta-D-ribosyl)-5'-AMP + diphosphate + H(+). Its pathway is amino-acid biosynthesis; L-histidine biosynthesis; L-histidine from 5-phospho-alpha-D-ribose 1-diphosphate: step 2/9. The sequence is that of Phosphoribosyl-ATP pyrophosphatase from Rhizobium etli (strain CIAT 652).